The sequence spans 757 residues: Zinc finger CCCH domain-containing protein 5 (757 aa).

Residues 1–127 (MEQANEKEEE…REEEERRWKD (127 aa)) are disordered. Residues 13-35 (HEEAAGEKESFEESKEKAAEMSR) show a composition bias toward basic and acidic residues. Residues 36–50 (KEKRKAMKKLKRKQV) show a composition bias toward basic residues. Over residues 51–127 (RKEIAAKERE…REEEERRWKD (77 aa)) the composition is skewed to basic and acidic residues. The C3H1-type 1 zinc-finger motif lies at 240-268 (EQDKAHCPFHLKTGACRFGQRCSRVHFYP). In terms of domain architecture, RRM spans 295-372 (YTDEEAELCY…KQVNCEFVNI (78 aa)). Residues 374-404 (RWKVAICGEYMKSRLKTCSRGSACNFIHCFR) form a C3H1-type 2 zinc finger. Residues 441 to 757 (HESSGSLNDS…EEEIERWRPV (317 aa)) are disordered. Positions 444–455 (SGSLNDSISDLS) are enriched in polar residues. Positions 487-546 (YHGDTQDSTREDKLRRHAENCHDGDDSPSRDGSLEREMYKERRYAKDTLHRDSRWSEHSP) are enriched in basic and acidic residues. Composition is skewed to basic residues over residues 547-557 (GHRVGRKRIHG) and 600-609 (KTHRSSRKHS). Basic and acidic residues-rich tracts occupy residues 610-634 (REGSSADKEEGHEHDRVHTVSDKSH), 644-672 (RSSSRYSHEEDSTESRHHQHKESDKKRSV), and 681-721 (SDKD…ETHK). Positions 722-733 (ERRHRHRKRRRT) are enriched in basic residues.

This chain is Zinc finger CCCH domain-containing protein 5, found in Arabidopsis thaliana (Mouse-ear cress).